The sequence spans 306 residues: Pantothenate kinase (306 aa).

Residue 91 to 98 coordinates ATP; it reads GSVAVGKS.

This sequence belongs to the prokaryotic pantothenate kinase family.

It is found in the cytoplasm. It carries out the reaction (R)-pantothenate + ATP = (R)-4'-phosphopantothenate + ADP + H(+). It participates in cofactor biosynthesis; coenzyme A biosynthesis; CoA from (R)-pantothenate: step 1/5. This is Pantothenate kinase from Streptococcus pneumoniae (strain Hungary19A-6).